A 780-amino-acid chain; its full sequence is Replication origin-binding protein (780 aa).

The region spanning 39-195 (SFENVRQPIK…AAFKPDTQIA (157 aa)) is the Helicase ATP-binding domain. ATP is bound at residue 52-59 (AAMGSGKT).

Belongs to the herpesviridae OriBP family.

In terms of biological role, probably involved in DNA replication. Binds the origin of replication (ori). In Homo sapiens (Human), this protein is Replication origin-binding protein (U73).